The following is a 122-amino-acid chain: Large ribosomal subunit protein uL14 (122 aa).

This sequence belongs to the universal ribosomal protein uL14 family. As to quaternary structure, part of the 50S ribosomal subunit. Forms a cluster with proteins L3 and L19. In the 70S ribosome, L14 and L19 interact and together make contacts with the 16S rRNA in bridges B5 and B8.

Binds to 23S rRNA. Forms part of two intersubunit bridges in the 70S ribosome. This Nitrobacter winogradskyi (strain ATCC 25391 / DSM 10237 / CIP 104748 / NCIMB 11846 / Nb-255) protein is Large ribosomal subunit protein uL14.